Here is a 780-residue protein sequence, read N- to C-terminus: Myosin heavy chain kinase C (780 aa).

The Alpha-type protein kinase domain maps to 40-243; the sequence is IGDDLKPKWT…VCDFLKLKPI (204 aa). Residues 310-495 form a disordered region; the sequence is RIRAQQQQKS…MEQTPDRSEF (186 aa). Residues 337 to 350 are compositionally biased toward low complexity; that stretch reads QQSPSSPTSKPVPQ. Polar residues predominate over residues 353-376; that stretch reads KTPSQSNVVNKSPVSPPKENSNVK. Residues 380-436 are compositionally biased toward low complexity; sequence DNINNNNSSISSNNDNSNNNNNNNDNINNSSNSSSVNSNSSSVSSSSSSSSSSSSSS. The segment covering 437–450 has biased composition (polar residues); sequence TTNAAPISIQVSRN. The span at 458–488 shows a compositional bias: low complexity; that stretch reads IQPSSAAASASSTSSSNVPTPESTSTSSMEQ. WD repeat units follow at residues 507 to 546, 549 to 589, 591 to 628, 631 to 668, 671 to 708, and 748 to 780; these read DTVR…HVTN, AHGK…TIKE, KESN…CVKT, GHTR…ILTN, GHEG…CVNT, and NTRS…WDKM.

Belongs to the protein kinase superfamily. Alpha-type protein kinase family. ALPK subfamily. Interacts with myosin II heavy chain (mhcA). Autophosphorylated in vitro.

It is found in the cytoplasm. Its subcellular location is the cell cortex. The protein resides in the membrane. It localises to the cleavage furrow. It carries out the reaction L-threonyl-[myosin heavy-chain] + ATP = O-phospho-L-threonyl-[myosin heavy-chain] + ADP + H(+). Its function is as follows. Phosphorylates threonine at 'Thr-1823', 'Thr-1833' and 'Thr-2029' in the C-terminal tail region of myosin II heavy chain (mhcA). This phosphorylation is critical in actin-activated ATPase activity of the myosin and regulating the assembly and disassembly of myosin II filament. In vitro, catalytic domain phosphorylates mhcA, myelin basic protein, myosin regulatory light chain, casein and caldesmon. Drives the disassembly of myosin II filaments for efficient cytokinesis and recycling of myosin II that occurs during late cytokinesis. Can be activated in vitro by autophosphorylation. This is Myosin heavy chain kinase C (mhkC) from Dictyostelium discoideum (Social amoeba).